Consider the following 570-residue polypeptide: Multidrug and toxin extrusion protein 1 (570 aa).

N-acetylmethionine is present on M1. At M1–A37 the chain is on the cytoplasmic side. Residues L38–I58 traverse the membrane as a helical segment. The Extracellular portion of the chain corresponds to S59–D72. A helical membrane pass occupies residues A73 to S93. The Cytoplasmic portion of the chain corresponds to S94–A120. Residues L121–L141 form a helical membrane-spanning segment. At L142 to R152 the chain is on the extracellular side. A helical membrane pass occupies residues L153 to L173. The Cytoplasmic portion of the chain corresponds to Q174–K176. Residues Y177 to V197 form a helical membrane-spanning segment. The Extracellular portion of the chain corresponds to N198–S216. A helical transmembrane segment spans residues A217–G237. The Cytoplasmic segment spans residues K238–E251. Residues C252–M272 traverse the membrane as a helical segment. Over E273 to Q295 the chain is Extracellular. A helical transmembrane segment spans residues S296–A316. Residues S317–S336 lie on the Cytoplasmic side of the membrane. The chain crosses the membrane as a helical span at residues T337 to C357. The Extracellular portion of the chain corresponds to K358–D370. A helical transmembrane segment spans residues I371–L391. At A392–G408 the chain is on the cytoplasmic side. The chain crosses the membrane as a helical span at residues A409–F429. Topologically, residues A430–G437 are extracellular. The helical transmembrane segment at L438–I458 threads the bilayer. Residues Q459 to R546 lie on the Cytoplasmic side of the membrane. The segment at D508–S534 is disordered. Basic and acidic residues predominate over residues M521–D533. Residues G547–V567 form a helical membrane-spanning segment. The Extracellular segment spans residues R568 to Q570.

Belongs to the multi antimicrobial extrusion (MATE) (TC 2.A.66.1) family.

It localises to the cell membrane. Its subcellular location is the apical cell membrane. It carries out the reaction thiamine(out) + H(+)(in) = thiamine(in) + H(+)(out). The enzyme catalyses estrone 3-sulfate(in) + H(+)(out) = estrone 3-sulfate(out) + H(+)(in). It catalyses the reaction creatinine(in) + H(+)(out) = creatinine(out) + H(+)(in). The catalysed reaction is agmatine(in) + H(+)(out) = agmatine(out) + H(+)(in). In terms of biological role, multidrug efflux pump that functions as a H(+)/organic cation antiporter. Plays a physiological role in the excretion of cationic compounds including endogenous metabolites, drugs, toxins through the kidney and liver, into urine and bile respectively. Mediates the efflux of endogenous compounds such as creatinine, vitamin B1/thiamine, agmatine and estrone-3-sulfate. May also contribute to regulate the transport of cationic compounds in testis across the blood-testis-barrier. The protein is Multidrug and toxin extrusion protein 1 (SLC47A1) of Pongo abelii (Sumatran orangutan).